The chain runs to 222 residues: Cytidylate kinase (222 aa).

Gly9 to Thr17 is a binding site for ATP.

Belongs to the cytidylate kinase family. Type 1 subfamily.

Its subcellular location is the cytoplasm. The catalysed reaction is CMP + ATP = CDP + ADP. It carries out the reaction dCMP + ATP = dCDP + ADP. The polypeptide is Cytidylate kinase (Thermodesulfovibrio yellowstonii (strain ATCC 51303 / DSM 11347 / YP87)).